Here is a 194-residue protein sequence, read N- to C-terminus: Crossover junction endodeoxyribonuclease RuvC (194 aa).

Active-site residues include Asp-7, Glu-68, and Asp-141. Residues Asp-7, Glu-68, and Asp-141 each contribute to the Mg(2+) site.

Belongs to the RuvC family. Homodimer which binds Holliday junction (HJ) DNA. The HJ becomes 2-fold symmetrical on binding to RuvC with unstacked arms; it has a different conformation from HJ DNA in complex with RuvA. In the full resolvosome a probable DNA-RuvA(4)-RuvB(12)-RuvC(2) complex forms which resolves the HJ. Mg(2+) serves as cofactor.

It is found in the cytoplasm. The catalysed reaction is Endonucleolytic cleavage at a junction such as a reciprocal single-stranded crossover between two homologous DNA duplexes (Holliday junction).. In terms of biological role, the RuvA-RuvB-RuvC complex processes Holliday junction (HJ) DNA during genetic recombination and DNA repair. Endonuclease that resolves HJ intermediates. Cleaves cruciform DNA by making single-stranded nicks across the HJ at symmetrical positions within the homologous arms, yielding a 5'-phosphate and a 3'-hydroxyl group; requires a central core of homology in the junction. The consensus cleavage sequence is 5'-(A/T)TT(C/G)-3'. Cleavage occurs on the 3'-side of the TT dinucleotide at the point of strand exchange. HJ branch migration catalyzed by RuvA-RuvB allows RuvC to scan DNA until it finds its consensus sequence, where it cleaves and resolves the cruciform DNA. This Bifidobacterium longum (strain DJO10A) protein is Crossover junction endodeoxyribonuclease RuvC.